A 269-amino-acid polypeptide reads, in one-letter code: MNDLKLDKVSKVLKEVRKSVPLVHCITNYVTINDCANILLSYGASPAMCEAYDEVFDFVKISSALYINIGTFTREQESSAILAAVSAKTHNIPVVLDPVACAAIPKKIQFIDKLFKVGRVDVIKGNIGEIKFLAGETSNVKGVDSLEDGEGALECSRILSEKYNCVVAATGKKDFIVQGKNSAIIENGTEMLTNITGAGCMLGALCAAACGAFEDKFMAVVGAILSINIASEEAYKEAKAPGSFRVKLIDCIYELSEEKLKKEGKIAWN.

A substrate-binding site is contributed by methionine 48. Residues lysine 124 and threonine 170 each coordinate ATP. Glycine 197 is a substrate binding site.

It belongs to the Thz kinase family. Mg(2+) serves as cofactor.

The catalysed reaction is 5-(2-hydroxyethyl)-4-methylthiazole + ATP = 4-methyl-5-(2-phosphooxyethyl)-thiazole + ADP + H(+). It functions in the pathway cofactor biosynthesis; thiamine diphosphate biosynthesis; 4-methyl-5-(2-phosphoethyl)-thiazole from 5-(2-hydroxyethyl)-4-methylthiazole: step 1/1. Its function is as follows. Catalyzes the phosphorylation of the hydroxyl group of 4-methyl-5-beta-hydroxyethylthiazole (THZ). This Clostridium kluyveri (strain NBRC 12016) protein is Hydroxyethylthiazole kinase.